Consider the following 381-residue polypeptide: Chaperone protein DnaJ (381 aa).

In terms of domain architecture, J spans 5–70 (DYYEVLGVSR…DKKAAYDRYG (66 aa)). Residues 140–218 (GVQKTINVPA…CHGAGRVEKE (79 aa)) form a CR-type zinc finger. The Zn(2+) site is built by C153, C156, C170, C173, C192, C195, C206, and C209. 4 CXXCXGXG motif repeats span residues 153–160 (CDACKGTG), 170–177 (CPTCSGMG), 192–199 (CPTCNGMG), and 206–213 (CKVCHGAG).

This sequence belongs to the DnaJ family. As to quaternary structure, homodimer. Zn(2+) is required as a cofactor.

The protein resides in the cytoplasm. Its function is as follows. Participates actively in the response to hyperosmotic and heat shock by preventing the aggregation of stress-denatured proteins and by disaggregating proteins, also in an autonomous, DnaK-independent fashion. Unfolded proteins bind initially to DnaJ; upon interaction with the DnaJ-bound protein, DnaK hydrolyzes its bound ATP, resulting in the formation of a stable complex. GrpE releases ADP from DnaK; ATP binding to DnaK triggers the release of the substrate protein, thus completing the reaction cycle. Several rounds of ATP-dependent interactions between DnaJ, DnaK and GrpE are required for fully efficient folding. Also involved, together with DnaK and GrpE, in the DNA replication of plasmids through activation of initiation proteins. This is Chaperone protein DnaJ from Cereibacter sphaeroides (strain KD131 / KCTC 12085) (Rhodobacter sphaeroides).